Reading from the N-terminus, the 413-residue chain is Calsequestrin-2 (413 aa).

Positions 1-19 (MKRIYLLVVGLYLLSFSRA) are cleaved as a signal peptide. At tyrosine 282 the chain carries Phosphotyrosine. N-linked (GlcNAc...) asparagine glycosylation is present at asparagine 335. Residues 365–413 (VLSGKINTEDDDNEDEDDDGDNDNDDDDDDDDNSDEDNDDSDDDDDDDE) are disordered. Over residues 373–413 (EDDDNEDEDDDGDNDNDDDDDDDDNSDEDNDDSDDDDDDDE) the composition is skewed to acidic residues. Serine 398 and serine 405 each carry phosphoserine.

Belongs to the calsequestrin family. Monomer, homodimer and homooligomer. Mostly monomeric in the absence of calcium. Forms higher oligomers in a calcium-dependent manner. Dimers associate to form tetramers, that then form linear homomer chains. Interacts with ASPH and TRDN. In terms of processing, phosphorylation in the C-terminus, probably by CK2, moderately increases calcium buffering capacity. N-glycosylated. In terms of tissue distribution, detected in stomach and vas deferens (at protein level).

Its subcellular location is the sarcoplasmic reticulum lumen. Calsequestrin is a high-capacity, moderate affinity, calcium-binding protein and thus acts as an internal calcium store in muscle. Calcium ions are bound by clusters of acidic residues at the protein surface, especially at the interface between subunits. Can bind around 60 Ca(2+) ions. Regulates the release of lumenal Ca(2+) via the calcium release channel RYR2; this plays an important role in triggering muscle contraction. Plays a role in excitation-contraction coupling in the heart and in regulating the rate of heart beats. The chain is Calsequestrin-2 (Casq2) from Rattus norvegicus (Rat).